A 1006-amino-acid chain; its full sequence is Unconventional myosin-Id (1006 aa).

Residue alanine 2 is modified to N-acetylalanine. The Myosin motor domain occupies 9 to 695; sequence FGKADFVLMD…TLFTLEELRA (687 aa). An ATP-binding site is contributed by 102–109; the sequence is GESGAGKT. Phosphoserine is present on serine 200. The residue at position 536 (tyrosine 536) is a Phosphotyrosine. Residues 572 to 594 are actin-binding; sequence MIALVDNLASKEPYYVRCIKPND. IQ domains are found at residues 699 to 719 and 721 to 741; these read IRIV…MRYK and TKAA…SYIQ. In terms of domain architecture, TH1 spans 812–1005; sequence GQRADLGLQR…RSGFILSVPG (194 aa).

It belongs to the TRAFAC class myosin-kinesin ATPase superfamily. Myosin family. Interacts (via the two IQ motifs) with calmodulin. Binds an additional calmodulin chain via a third, C-terminal region. Interacts with F-actin.

It localises to the cytoplasm. The protein resides in the perikaryon. The protein localises to the cell projection. Its subcellular location is the dendrite. It is found in the early endosome. It localises to the cell cortex. Unconventional myosin that functions as actin-based motor protein with ATPase activity. Plays a role in endosomal protein trafficking, and especially in the transfer of cargo proteins from early to recycling endosomes. Required for normal planar cell polarity in ciliated tracheal cells, for normal rotational polarity of cilia, and for coordinated, unidirectional ciliary movement in the trachea. Required for normal, polarized cilia organization in brain ependymal epithelial cells. This is Unconventional myosin-Id (MYO1D) from Canis lupus familiaris (Dog).